Reading from the N-terminus, the 122-residue chain is Large ribosomal subunit protein uL14c (122 aa).

Belongs to the universal ribosomal protein uL14 family. In terms of assembly, part of the 50S ribosomal subunit.

It is found in the plastid. The protein resides in the chloroplast. In terms of biological role, binds to 23S rRNA. The polypeptide is Large ribosomal subunit protein uL14c (Psilotum nudum (Whisk fern)).